The primary structure comprises 280 residues: uncharacterized protein (280 aa).

The HTH rpiR-type domain maps to 1–78 (MDVIQRIKEK…VLLAQSISRA (78 aa)). Residues 37–57 (ISDLSEKAGVKSEASVVKFYK) constitute a DNA-binding region (H-T-H motif). Residues 123-263 (TVDLFKNAQR…YTLLAARDPR (141 aa)) enclose the SIS domain.

This is an uncharacterized protein from Thermotoga maritima (strain ATCC 43589 / DSM 3109 / JCM 10099 / NBRC 100826 / MSB8).